We begin with the raw amino-acid sequence, 599 residues long: Elongation factor 4 (599 aa).

In terms of domain architecture, tr-type G spans 5-187 (SHIRNFSIIA…RLVQTIPAPT (183 aa)). GTP is bound by residues 17 to 22 (DHGKST) and 134 to 137 (NKMD).

It belongs to the TRAFAC class translation factor GTPase superfamily. Classic translation factor GTPase family. LepA subfamily.

It is found in the cell inner membrane. The catalysed reaction is GTP + H2O = GDP + phosphate + H(+). Its function is as follows. Required for accurate and efficient protein synthesis under certain stress conditions. May act as a fidelity factor of the translation reaction, by catalyzing a one-codon backward translocation of tRNAs on improperly translocated ribosomes. Back-translocation proceeds from a post-translocation (POST) complex to a pre-translocation (PRE) complex, thus giving elongation factor G a second chance to translocate the tRNAs correctly. Binds to ribosomes in a GTP-dependent manner. This Ectopseudomonas mendocina (strain ymp) (Pseudomonas mendocina) protein is Elongation factor 4.